A 433-amino-acid chain; its full sequence is Histidinol dehydrogenase (433 aa).

Residues Ser-236, Gln-258, and His-261 each contribute to the substrate site. Residues Gln-258 and His-261 each contribute to the Zn(2+) site. Residues Glu-325 and His-326 each act as proton acceptor in the active site. Positions 326, 359, 413, and 418 each coordinate substrate. Position 359 (Asp-359) interacts with Zn(2+). His-418 provides a ligand contact to Zn(2+).

This sequence belongs to the histidinol dehydrogenase family. It depends on Zn(2+) as a cofactor.

It carries out the reaction L-histidinol + 2 NAD(+) + H2O = L-histidine + 2 NADH + 3 H(+). The protein operates within amino-acid biosynthesis; L-histidine biosynthesis; L-histidine from 5-phospho-alpha-D-ribose 1-diphosphate: step 9/9. Functionally, catalyzes the sequential NAD-dependent oxidations of L-histidinol to L-histidinaldehyde and then to L-histidine. The sequence is that of Histidinol dehydrogenase from Pseudoalteromonas translucida (strain TAC 125).